The following is a 579-amino-acid chain: Protein PLASTID MOVEMENT IMPAIRED 15 (579 aa).

4 coiled-coil regions span residues 90–161 (EVLK…NEEH), 188–216 (KVLD…IEIE), 383–419 (QKTK…KLES), and 481–501 (LMKT…EERE).

This sequence belongs to the WEB family.

In terms of biological role, required for the chloroplast avoidance response under high intensity blue light. This avoidance response consists in the relocation of chloroplasts on the anticlinal side of exposed cells. The sequence is that of Protein PLASTID MOVEMENT IMPAIRED 15 (PMI15) from Arabidopsis thaliana (Mouse-ear cress).